Consider the following 330-residue polypeptide: tRNA (guanine(37)-N(1))-methyltransferase Trm5b (330 aa).

S-adenosyl-L-methionine is bound by residues Arg173, 211–212 (DI), 238–239 (DS), and Asn252.

The protein belongs to the class I-like SAM-binding methyltransferase superfamily. TRM5/TYW2 family.

The protein resides in the cytoplasm. It catalyses the reaction guanosine(37) in tRNA + S-adenosyl-L-methionine = N(1)-methylguanosine(37) in tRNA + S-adenosyl-L-homocysteine + H(+). Its function is as follows. Specifically methylates the N1 position of guanosine-37 in various tRNAs. In Pyrococcus abyssi (strain GE5 / Orsay), this protein is tRNA (guanine(37)-N(1))-methyltransferase Trm5b.